The chain runs to 561 residues: NO-associated protein 1, chloroplastic/mitochondrial (561 aa).

Residues 1 to 31 constitute a chloroplast and mitochondrion transit peptide; it reads MALRTLSTFPSLPRRHTTTRREPNLTVIYRN. Residues 108-111, 166-174, 223-226, 260-261, and 289-294 each bind GTP; these read CYGC, YPGGKQFVS, TKID, SK, and NVGKSA. A CP-type G domain is found at 175-351; that stretch reads ADELREKLSH…LYDTPGVHLH (177 aa).

It belongs to the TRAFAC class YlqF/YawG GTPase family. NOA1 subfamily. As to expression, expressed in aleurone layer and the embryo.

Its subcellular location is the mitochondrion. The protein resides in the plastid. It localises to the chloroplast. It carries out the reaction 2 L-arginine + 3 NADPH + 4 O2 + H(+) = 2 L-citrulline + 2 nitric oxide + 3 NADP(+) + 4 H2O. With respect to regulation, stimulated by calcium/calmodulin. Inhibited by L-NAME. Not activated by tetrahydrobiopterin (BH4), FAD, FMN, or heme. In terms of biological role, exhibits cGTPase activity; binds and hydrolyzes specifically GTP. May participate in ribosome assembly and stability and thus regulates protein synthesis in chloroplasts. The GTPase activity requires MgCl(2)and the presence of either KCl or (NH(4))(2)SO(4). Involved in the post-transcriptional regulation of the methylerythritol phosphate (MEP) pathway. Involved in chlorophyll-a fluorescence regulation. Its function is as follows. May mediate the production or accumulation of nitric oxide (NO) which is a messenger molecule involved in hormonal signaling and defense responses in plant. Acts as an antisenescence agent. Plays a crucial role in both extracellular calmodulin (ExtCaM)-triggered and salicylic acid (SA)-mediated H(2)O(2)-dependent stomatal closure. The protein is NO-associated protein 1, chloroplastic/mitochondrial (NOA1) of Arabidopsis thaliana (Mouse-ear cress).